Here is a 536-residue protein sequence, read N- to C-terminus: ATP synthase subunit alpha, mitochondrial (536 aa).

The transit peptide at 1–27 (MLRQAGTRLLKVPVCGLRPSITLKRGY) directs the protein to the mitochondrion. ATP is bound at residue 197 to 204 (GDRQTGKT).

The protein belongs to the ATPase alpha/beta chains family. F-type ATPases have 2 components, CF(1) - the catalytic core - and CF(0) - the membrane proton channel. CF(1) has five subunits: alpha(3), beta(3), gamma(1), delta(1), epsilon(1). CF(0) has three main subunits: a, b and c.

Its subcellular location is the mitochondrion. It localises to the mitochondrion inner membrane. Mitochondrial membrane ATP synthase (F(1)F(0) ATP synthase or Complex V) produces ATP from ADP in the presence of a proton gradient across the membrane which is generated by electron transport complexes of the respiratory chain. F-type ATPases consist of two structural domains, F(1) - containing the extramembraneous catalytic core, and F(0) - containing the membrane proton channel, linked together by a central stalk and a peripheral stalk. During catalysis, ATP synthesis in the catalytic domain of F(1) is coupled via a rotary mechanism of the central stalk subunits to proton translocation. Subunits alpha and beta form the catalytic core in F(1). Rotation of the central stalk against the surrounding alpha(3)beta(3) subunits leads to hydrolysis of ATP in three separate catalytic sites on the beta subunits. Subunit alpha does not bear the catalytic high-affinity ATP-binding sites. The chain is ATP synthase subunit alpha, mitochondrial (atp1) from Schizosaccharomyces pombe (strain 972 / ATCC 24843) (Fission yeast).